The chain runs to 1526 residues: Myosin type-2 heavy chain 1 (1526 aa).

A Myosin N-terminal SH3-like domain is found at 22-73 (DDKRWVWISDPETAFTKAWIKEDLPDKKYVVRYNNSRDEKIVGEDEIDPVNP). The region spanning 77-755 (DRVNDMAELT…VLAELEERRV (679 aa)) is the Myosin motor domain. 170 to 177 (GESGAGKT) contributes to the ATP binding site. 2 actin-binding regions span residues 634–656 (LNQLMNQFNSTQPHFIRCIVPNE) and 734–748 (RIGVSKIFFKAGVLA). Residues 758-787 (LQRLMTMLQTRIRGFLQRKIFQKRLKDIQA) form the IQ domain. The stretch at 875–1244 (ALDKEEILRR…SLTKQVNELS (370 aa)) forms a coiled coil. S1044 carries the post-translational modification Phosphoserine.

The protein belongs to the TRAFAC class myosin-kinesin ATPase superfamily. Myosin family. In terms of assembly, binds to cdc4 and rlc1.

In terms of biological role, required for cell division. It is a component of the cdc12 'spot', a structure thought to mark the site of septation. May work in conjunction with myo3. In Schizosaccharomyces pombe (strain 972 / ATCC 24843) (Fission yeast), this protein is Myosin type-2 heavy chain 1 (myo2).